Consider the following 279-residue polypeptide: Fatty acid metabolism regulator protein (279 aa).

Residues 6-74 form the HTH gntR-type domain; sequence KSPAGFAEKY…HGKPTKVNQF (69 aa). The H-T-H motif DNA-binding region spans 34–53; the sequence is ERELSELIGVTRTTLREVLQ.

Homodimer.

It is found in the cytoplasm. Functionally, multifunctional regulator of fatty acid metabolism. In Vibrio vulnificus (strain CMCP6), this protein is Fatty acid metabolism regulator protein.